A 1181-amino-acid polypeptide reads, in one-letter code: Poly [ADP-ribose] polymerase tankyrase (1181 aa).

ANK repeat units lie at residues 56–85, 89–118, 122–151, 209–238, 242–271, 275–304, 362–394, 398–427, 431–458, 483–513, 519–548, 552–581, 585–614, 638–668, 672–701, 705–734, 738–767, and 771–799; these read RKSTPLHFAAGYGRREVVEFLLNSGASIQA, GGLHPLHNCCSFGHAEVVRLLLKAGASPNT, WNYTPLHEAASKGKVDVCLALLQHGANHTI, RRSTPLHLAAGYNRIGIVEILLANGADVHA, GGLVPLHNACSYGHFDVTKLLIQAGANVNA, WAFTPLHEAASKSRVEVCSLLLSRGADPTL, TGDTPLHLAVVSPDGKRKQLMELLTRKGSLLNE, AFLTPLHLAAELLHYDAMEVLLKQGAKVNA, LGQTPLHRCARDEQAVRLLLSYAADTNI, DSETHLLEAAKAGDLDTVRRIVLNNPISVNC, RHSTPLHFAAGFNRVPVVQFLLEHGAEVYA, GGLVPLHNACSYGHYEVTELLVKHGANVNV, WKFTPLHEAAAKGKYDICKLLLKHGADPMK, RGPSALLDAAKKGNLARVQRLVTPESINCRD, RNSTPLHLAAGYNNFECAEYLLENGADVNA, GGLIPLHNASSYGHLDIAALLIKHKTVVNA, WGFTPLHEAAQKGRTQLCSLLLAHGADAYM, and EGQTPIELATADDVKCLLQDAMATSLSQQ. Disordered stretches follow at residues 807 to 834 and 864 to 886; these read SLTSSSPAPDATAAAAPGTSSSSSSAIL and RISPAQGAEANGAEGSSSDDLLP. The SAM domain occupies 889-952; sequence DTITNVSGFL…LKGIAQLRST (64 aa). Residues 969–1174 form the PARP catalytic domain; that stretch reads LPDDKEFVAV…YQIVKPDDSS (206 aa). Cysteine 1091, histidine 1094, cysteine 1099, and cysteine 1102 together coordinate Zn(2+).

It belongs to the ARTD/PARP family. In terms of assembly, interacts (via ANK repeats) with PI31.

The catalysed reaction is NAD(+) + (ADP-D-ribosyl)n-acceptor = nicotinamide + (ADP-D-ribosyl)n+1-acceptor + H(+).. The enzyme catalyses L-aspartyl-[protein] + NAD(+) = 4-O-(ADP-D-ribosyl)-L-aspartyl-[protein] + nicotinamide. It carries out the reaction L-glutamyl-[protein] + NAD(+) = 5-O-(ADP-D-ribosyl)-L-glutamyl-[protein] + nicotinamide. Stimulates proteasome activity, probably by ADP-ribosylation of PI31. Modulates 26S proteasome assembly. This is Poly [ADP-ribose] polymerase tankyrase from Drosophila melanogaster (Fruit fly).